Here is a 450-residue protein sequence, read N- to C-terminus: Trigger factor (450 aa).

The 86-residue stretch at 161–246 (GDRVVIDFKG…VKTVEAPEYP (86 aa)) folds into the PPIase FKBP-type domain. A disordered region spans residues 422–450 (PMSLQELMSPQQPEAESAEGESKQDETKE). Residues 441-450 (GESKQDETKE) are compositionally biased toward basic and acidic residues.

Belongs to the FKBP-type PPIase family. Tig subfamily.

It localises to the cytoplasm. It catalyses the reaction [protein]-peptidylproline (omega=180) = [protein]-peptidylproline (omega=0). Its function is as follows. Involved in protein export. Acts as a chaperone by maintaining the newly synthesized protein in an open conformation. Functions as a peptidyl-prolyl cis-trans isomerase. This is Trigger factor from Alkalilimnicola ehrlichii (strain ATCC BAA-1101 / DSM 17681 / MLHE-1).